Consider the following 322-residue polypeptide: p55-v-Fos-transforming protein (322 aa).

Residues 69–95 (APGGRGQSIGRRGKVEQLSPEEEEKRR) form a disordered region. Positions 91 to 154 (EEKRRIRRER…EKLEFILAAH (64 aa)) constitute a bZIP domain. Residues 93–113 (KRRIRRERNKMAAAKCRNRRR) form a basic motif region. Residues 119 to 147 (LQAETDQLEEEKSALQAEIANLLKEKEKL) are leucine-zipper. Residues 298–322 (AAHRKGSSSNEPSSDSLSSPTLLAL) form a disordered region. The span at 304–316 (SSSNEPSSDSLSS) shows a compositional bias: low complexity.

Belongs to the bZIP family. Fos subfamily.

The protein resides in the host nucleus. This Galliformes protein is p55-v-Fos-transforming protein (V-FOS).